The sequence spans 425 residues: Adenylosuccinate synthetase (425 aa).

GTP is bound by residues 12 to 18 and 40 to 42; these read GDEGKGK and GHT. The Proton acceptor role is filled by Asp-13. Mg(2+) is bound by residues Asp-13 and Gly-40. IMP contacts are provided by residues 13-16, 38-41, Thr-130, Arg-144, Gln-224, Thr-239, and Arg-301; these read DEGK and NAGH. His-41 (proton donor) is an active-site residue. Substrate is bound at residue 297 to 303; sequence TVSNRRR. GTP-binding positions include Arg-303, 329 to 331, and 411 to 413; these read KLD and STS.

Belongs to the adenylosuccinate synthetase family. Homodimer. Mg(2+) serves as cofactor.

It localises to the cytoplasm. The enzyme catalyses IMP + L-aspartate + GTP = N(6)-(1,2-dicarboxyethyl)-AMP + GDP + phosphate + 2 H(+). It participates in purine metabolism; AMP biosynthesis via de novo pathway; AMP from IMP: step 1/2. Its function is as follows. Plays an important role in the de novo pathway of purine nucleotide biosynthesis. Catalyzes the first committed step in the biosynthesis of AMP from IMP. This chain is Adenylosuccinate synthetase, found in Wolbachia pipientis subsp. Culex pipiens (strain wPip).